Reading from the N-terminus, the 400-residue chain is MGFITKAIPLALAAASVINGAEILETRAGVQTLADKYIVVMNDGISDKDFDSHRSWVNRNHRRRLIRRGAKAMGGMKHTYNFPTGLKGYSGHFDEQMINEISKRADVKYIERDARVQINAIEQQDNVPSWGLARVGSKEPGGTTYYYDSTAGEGSTAYVIDTGTDIQHEEFEGRATWGANFVDDMDMDCNGHGTHVSGTIGGKTFGVAKKSNVVAVKVLDCSGSGSNSGVIMGMEWATKDAQQKGADKAVANMSLGGAFSQASNDAAAAIAKGGVFLAVAAGNDNVDAADSSPASEPSICTIAASTEQDSKADFSNFGQVVDVYAPGDSITSAKPGGGSQVLSGTSMATPHVAGLGAYLIGLGKGGGPGLCDTIKQMAIDVIQNPGASTTSKLINNGSGM.

An N-terminal signal peptide occupies residues 1–20 (MGFITKAIPLALAAASVING). Residues 21–119 (AEILETRAGV…IERDARVQIN (99 aa)) constitute a propeptide that is removed on maturation. Residues 36–118 (KYIVVMNDGI…YIERDARVQI (83 aa)) form the Inhibitor I9 domain. Positions 129 to 400 (SWGLARVGSK…SKLINNGSGM (272 aa)) constitute a Peptidase S8 domain. Catalysis depends on charge relay system residues Asp-161 and His-192. Asn-252 is a glycosylation site (N-linked (GlcNAc...) asparagine). Ser-346 functions as the Charge relay system in the catalytic mechanism. Asn-396 is a glycosylation site (N-linked (GlcNAc...) asparagine).

This sequence belongs to the peptidase S8 family.

It is found in the secreted. Functionally, secreted subtilisin-like serine protease with keratinolytic activity that contributes to pathogenicity. The protein is Subtilisin-like protease 7 (SUB7) of Trichophyton violaceum.